The primary structure comprises 191 residues: Neuronal calcium sensor 1 (191 aa).

The N-myristoyl glycine moiety is linked to residue Gly2. 4 EF-hand domains span residues Glu24–Gly59, Asp60–Gly95, Thr96–Met131, and Thr144–Ile179. Ca(2+) contacts are provided by Asp73, Asn75, Asp77, Glu84, Asp109, Asp111, Asp113, Glu120, Asp157, Asn159, Asp161, Lys163, and Glu168.

Belongs to the recoverin family.

Its function is as follows. Neuronal calcium sensor, regulator of G protein-coupled receptor phosphorylation in a calcium dependent manner. Regulates neurite extension and branching by activity-dependent (Ca2+) influx in growth cones. The protein is Neuronal calcium sensor 1 of Aplysia californica (California sea hare).